The chain runs to 1213 residues: MLNGHVVNYGKHRTRRSFSRIKEVLKLPNLTDVQTESYKWFLDKGIKEVFDDIMPISDFSGKLSLEYEGYKLQKPKYTVDEARDHDATYAAPMRVTLKLTNQETGEIKTQDVFFGDLPLMTESGSFIVNGAERVIVSQLVRSPGVYYTGDYDKNGRQIFGTTVIPNRGAWLEYETDAKNVSFVRVDRTRKLPLTVLIRAMGIGSDSDIIDMFGQSDTLQFTLDKDVHKNPADSRVAEAIKDIYERLRPGEPKTTDSSRSLLYARFFDPRRYDLAPVGRYKINKKLSLKNRLYGQTLAETLADPDTGEIIAKKDTVVTHEVMDKLAPYLDRDDFKMVTYQPSKEGVLPDPITVQEIKVYSKVDPEREVKLMSNGHIAEDVKHLTPADVLASINYFFALQDKIGTTDDIDHLGNRRIRRVGELLQNQFRIGLARMERVVRERMSIQDPLTVTPQQLINIRPIVASIKEFFGSSQLSQFMDQHNPLGELTHKRRMSALGPGGLTRDRAGYEVRDVHYTHYGRLCPIETPEGPNIGLINSLASYAIINKYGFIETPYRRVSWKTHKVTDKIDYLTADEEDNYIIAGANTPLNDDGSFKSDVILARQKEDNVEVTPDKIDYMDVIPKQVVSVASACIPFLENDDSNRALMGANQQRQAEPLINPHGSLVGTGMEYRAAHDSGAALIAKAAGTVEYVDANEIRIRREDGTLDKYTLEKYRRSNNSKSYNQTPNVKLGDHVDVSDVIANGPTMDHGELALGQNPLIAFMTWNMYNYEDAIMLSERLVKDDVYTSISIEDYESEARDTKLGPEEITRELPNIGEDALKDLDADGIVRVGAEVHDGDILVGKVTPKGVTELSAEERLLHAIFGEKAHEVRDTSLRVPHGGGGIVQDVKVYTREAGDELSPGVNTMVRVYIAQKRKIQVGDKMSGRHGNKGTVAAVVPEEDMPYLPDGTPVDICLNPMGVPSRMNIGQLLELHLGAAARQLGIHVATPVFAGANENDVWDTVRQAGIDKDGKTVIYDGRTGEPFHNRVSVGVMHYLKLTHMVDDKIHARSIGPYSLVTQQPLGGKAQFGGQRFGEMEVWALEAYGAAYTLQEILTYKSDDVVGRVKAYEAIVKGERIPKPGVPESFRVLVKELQSLGLDIRVLDMNHNEIELRDMDEDSSEHLNIDSLSRMAEEQEKKKLAEETGKSGDKKENKKDADKPVAPADESDDKVSK.

The segment at 1169 to 1213 is disordered; that stretch reads SRMAEEQEKKKLAEETGKSGDKKENKKDADKPVAPADESDDKVSK. Residues 1171–1199 show a composition bias toward basic and acidic residues; sequence MAEEQEKKKLAEETGKSGDKKENKKDADK.

The protein belongs to the RNA polymerase beta chain family. As to quaternary structure, the RNAP catalytic core consists of 2 alpha, 1 beta, 1 beta' and 1 omega subunit. When a sigma factor is associated with the core the holoenzyme is formed, which can initiate transcription.

The catalysed reaction is RNA(n) + a ribonucleoside 5'-triphosphate = RNA(n+1) + diphosphate. DNA-dependent RNA polymerase catalyzes the transcription of DNA into RNA using the four ribonucleoside triphosphates as substrates. This chain is DNA-directed RNA polymerase subunit beta, found in Lactobacillus helveticus (strain DPC 4571).